A 199-amino-acid chain; its full sequence is MALPALVAAAAPAVIGGIASYFGQQETNAANAKLAVWQTRENQAEAARNRKWQEQMSNSAHQREANDLQTAGLNRLLTATGGASTPSGGQGQAAGATMENSLKAGITTAFEAKQLGMQIERQEKELQNLAAQTRKLNIDAKVAEKRIPESDLKTKFTTNFSPVIDRVINLEDSNGPRLSNLREEKKPNQMPLKNGKLNT.

Positions 171–199 are disordered; the sequence is EDSNGPRLSNLREEKKPNQMPLKNGKLNT.

It belongs to the microviridae H protein family.

The protein localises to the virion. Probably triggers with protein G the injection of the phage DNA into the host upon conformational changes induced by virus-host receptor interaction. The chain is Minor spike protein H from Bdellovibrio bacteriovorus (Bacteriophage phiMH2K).